Consider the following 368-residue polypeptide: Glutamate 5-kinase (368 aa).

Lys13 contacts ATP. 3 residues coordinate substrate: Ser54, Asp141, and Asn153. Residue 173-174 (SD) coordinates ATP. Residues 278 to 355 (RGVITVDEGA…DEIEAILGYA (78 aa)) enclose the PUA domain.

This sequence belongs to the glutamate 5-kinase family.

It localises to the cytoplasm. It carries out the reaction L-glutamate + ATP = L-glutamyl 5-phosphate + ADP. Its pathway is amino-acid biosynthesis; L-proline biosynthesis; L-glutamate 5-semialdehyde from L-glutamate: step 1/2. Its function is as follows. Catalyzes the transfer of a phosphate group to glutamate to form L-glutamate 5-phosphate. The protein is Glutamate 5-kinase of Ruegeria sp. (strain TM1040) (Silicibacter sp.).